The sequence spans 1639 residues: Peroxide stress-activated histidine kinase mak1 (1639 aa).

Residues 38–49 are compositionally biased toward polar residues; the sequence is SFTNSQNSSVGS. The interval 38 to 76 is disordered; it reads SFTNSQNSSVGSVHSPILESPTSLNRQHRNSFSFNNVSS. The span at 67 to 76 shows a compositional bias: low complexity; it reads NSFSFNNVSS. The PAS 1 domain maps to 716-786; the sequence is PFPLLKVIID…NDWKSSLFSG (71 aa). A PAC 1 domain is found at 789–841; it reads FYHEIRLQRFDNVYRYFICRAVPLRDCTGSVLHFFGTMTDVHDQKLAERELQK. The region spanning 848 to 920 is the PAS 2 domain; that stretch reads NENSYRSLAE…ESLEGTFNNQ (73 aa). One can recognise a PAC 2 domain in the interval 929–982; sequence FAAEIRFRSTDGHYRWHLVKSVCVNNSADTSTNLWLGTCTDIHDHKMLEEKLQE. A Histidine kinase domain is found at 1000–1223; it reads NMSHEIRTPL…RFMWTATFTM (224 aa). Phosphohistidine; by autocatalysis is present on His-1003. The region spanning 1507 to 1629 is the Response regulatory domain; it reads SVLLAEDNII…HLSLIISGIL (123 aa). 4-aspartylphosphate is present on Asp-1559.

The protein localises to the cytoplasm. It catalyses the reaction ATP + protein L-histidine = ADP + protein N-phospho-L-histidine.. Functionally, involved in the control of the SAPK-dependent transcriptional response to peroxide stress. Also has a role in G2/M regulation. In Schizosaccharomyces pombe (strain 972 / ATCC 24843) (Fission yeast), this protein is Peroxide stress-activated histidine kinase mak1 (mak1).